The sequence spans 564 residues: uncharacterized protein (564 aa).

Polar residues predominate over residues 1–17 (MRRPSTASLTRTPSRAS). Residues 1–564 (MRRPSTASLT…ASTPSSEVIS (564 aa)) form a disordered region. Composition is skewed to low complexity over residues 79-97 (SPRT…RASP) and 114-134 (SPTG…ASPT). The span at 153–168 (RSPSTASLTRTPSRAS) shows a compositional bias: polar residues. Low complexity predominate over residues 170-179 (TRWPPRASPT). The span at 250–271 (GSPPRASPMTPPRASPRTPPRA) shows a compositional bias: pro residues. Low complexity predominate over residues 272-299 (SPTTTPSRASLTRTPSWASPTTTPSRAS). The segment covering 318-351 (PTGTPSRASPTGTPSRASLTGSPSRASLTGTPSR) has biased composition (polar residues). A compositionally biased stretch (low complexity) spans 378-416 (RASLTGTSSTASLTRTPSRASLTRTQSSSSLTRTPSMAS). A compositionally biased stretch (polar residues) spans 467-564 (SRASLTRTPS…ASTPSSEVIS (98 aa)).

This is an uncharacterized protein from Homo sapiens (Human).